The following is a 226-amino-acid chain: Lipoprotein-releasing system ATP-binding protein LolD (226 aa).

The 221-residue stretch at 6 to 226 (VLISGLTKTF…KLYKGNLEEV (221 aa)) folds into the ABC transporter domain. Residue 42 to 49 (GESGSGKS) participates in ATP binding.

This sequence belongs to the ABC transporter superfamily. Lipoprotein translocase (TC 3.A.1.125) family. As to quaternary structure, the complex is composed of two ATP-binding proteins (LolD) and two transmembrane proteins (LolC and LolE).

Its subcellular location is the cell inner membrane. Functionally, part of the ABC transporter complex LolCDE involved in the translocation of mature outer membrane-directed lipoproteins, from the inner membrane to the periplasmic chaperone, LolA. Responsible for the formation of the LolA-lipoprotein complex in an ATP-dependent manner. This chain is Lipoprotein-releasing system ATP-binding protein LolD, found in Treponema denticola (strain ATCC 35405 / DSM 14222 / CIP 103919 / JCM 8153 / KCTC 15104).